The sequence spans 648 residues: Macrolide export ATP-binding/permease protein MacB (648 aa).

The 239-residue stretch at 5–243 (LELKDIRRSY…AGGTEPVVNT (239 aa)) folds into the ABC transporter domain. Residue 41-48 (GASGSGKS) participates in ATP binding. 4 consecutive transmembrane segments (helical) span residues 273-293 (LLTM…VVVG), 523-543 (LFLT…VMNI), 576-596 (AVLV…LIAF), and 600-620 (LFLP…AFLC).

Belongs to the ABC transporter superfamily. Macrolide exporter (TC 3.A.1.122) family. In terms of assembly, homodimer. Part of the tripartite efflux system MacAB-TolC, which is composed of an inner membrane transporter, MacB, a periplasmic membrane fusion protein, MacA, and an outer membrane component, TolC. The complex forms a large protein conduit and can translocate molecules across both the inner and outer membranes. Interacts with MacA.

The protein resides in the cell inner membrane. In terms of biological role, part of the tripartite efflux system MacAB-TolC. MacB is a non-canonical ABC transporter that contains transmembrane domains (TMD), which form a pore in the inner membrane, and an ATP-binding domain (NBD), which is responsible for energy generation. Confers resistance against macrolides. The protein is Macrolide export ATP-binding/permease protein MacB of Shigella sonnei (strain Ss046).